Consider the following 183-residue polypeptide: Peptidyl-tRNA hydrolase (183 aa).

Residue Tyr14 coordinates tRNA. His19 acts as the Proton acceptor in catalysis. TRNA is bound by residues Phe64 and Asn66.

The protein belongs to the PTH family. As to quaternary structure, monomer.

The protein localises to the cytoplasm. It carries out the reaction an N-acyl-L-alpha-aminoacyl-tRNA + H2O = an N-acyl-L-amino acid + a tRNA + H(+). In terms of biological role, hydrolyzes ribosome-free peptidyl-tRNAs (with 1 or more amino acids incorporated), which drop off the ribosome during protein synthesis, or as a result of ribosome stalling. Its function is as follows. Catalyzes the release of premature peptidyl moieties from peptidyl-tRNA molecules trapped in stalled 50S ribosomal subunits, and thus maintains levels of free tRNAs and 50S ribosomes. The sequence is that of Peptidyl-tRNA hydrolase from Syntrophomonas wolfei subsp. wolfei (strain DSM 2245B / Goettingen).